The following is a 435-amino-acid chain: tRNA modification GTPase MnmE (435 aa).

(6S)-5-formyl-5,6,7,8-tetrahydrofolate contacts are provided by R20, E77, and K117. Residues 214–359 (GIKVVIVGVP…FLKEIESFCL (146 aa)) enclose the TrmE-type G domain. GTP-binding positions include 224–229 (NSGKSS), 243–249 (TEEEGTT), and 268–271 (DTAG). Mg(2+) contacts are provided by S228 and T249. K435 contacts (6S)-5-formyl-5,6,7,8-tetrahydrofolate.

The protein belongs to the TRAFAC class TrmE-Era-EngA-EngB-Septin-like GTPase superfamily. TrmE GTPase family. As to quaternary structure, homodimer. Heterotetramer of two MnmE and two MnmG subunits. It depends on K(+) as a cofactor.

Its subcellular location is the cytoplasm. Its function is as follows. Exhibits a very high intrinsic GTPase hydrolysis rate. Involved in the addition of a carboxymethylaminomethyl (cmnm) group at the wobble position (U34) of certain tRNAs, forming tRNA-cmnm(5)s(2)U34. The polypeptide is tRNA modification GTPase MnmE (Bartonella bacilliformis (strain ATCC 35685 / KC583 / Herrer 020/F12,63)).